The following is a 197-amino-acid chain: Phosphoheptose isomerase (197 aa).

The region spanning 36–197 (MVNALLNEGK…IDSQLFGSEE (162 aa)) is the SIS domain. Residue 51 to 53 (NGG) participates in substrate binding. Zn(2+) contacts are provided by His60 and Glu64. Substrate-binding positions include Glu64, 93–94 (ND), 119–121 (STS), Ser124, and Gln174. Residues Gln174 and His182 each contribute to the Zn(2+) site.

This sequence belongs to the SIS family. GmhA subfamily. Homotetramer. It depends on Zn(2+) as a cofactor.

The protein resides in the cytoplasm. It catalyses the reaction 2 D-sedoheptulose 7-phosphate = D-glycero-alpha-D-manno-heptose 7-phosphate + D-glycero-beta-D-manno-heptose 7-phosphate. The protein operates within carbohydrate biosynthesis; D-glycero-D-manno-heptose 7-phosphate biosynthesis; D-glycero-alpha-D-manno-heptose 7-phosphate and D-glycero-beta-D-manno-heptose 7-phosphate from sedoheptulose 7-phosphate: step 1/1. In terms of biological role, catalyzes the isomerization of sedoheptulose 7-phosphate in D-glycero-D-manno-heptose 7-phosphate. This chain is Phosphoheptose isomerase, found in Pseudomonas syringae pv. syringae (strain B728a).